The primary structure comprises 459 residues: ATP synthase subunit beta (459 aa).

148 to 155 (GGAGVGKT) is an ATP binding site.

Belongs to the ATPase alpha/beta chains family. As to quaternary structure, F-type ATPases have 2 components, CF(1) - the catalytic core - and CF(0) - the membrane proton channel. CF(1) has five subunits: alpha(3), beta(3), gamma(1), delta(1), epsilon(1). CF(0) has three main subunits: a(1), b(2) and c(9-12). The alpha and beta chains form an alternating ring which encloses part of the gamma chain. CF(1) is attached to CF(0) by a central stalk formed by the gamma and epsilon chains, while a peripheral stalk is formed by the delta and b chains.

The protein localises to the cell inner membrane. The catalysed reaction is ATP + H2O + 4 H(+)(in) = ADP + phosphate + 5 H(+)(out). In terms of biological role, produces ATP from ADP in the presence of a proton gradient across the membrane. The catalytic sites are hosted primarily by the beta subunits. This Thiobacillus denitrificans (strain ATCC 25259 / T1) protein is ATP synthase subunit beta.